We begin with the raw amino-acid sequence, 257 residues long: High-affinity copper transporter ctrC (257 aa).

2 helical membrane passes run 79-99 (RGMFAGSCIGVICLVICLEFL) and 202-222 (YFNGYIIICIFIGAFLGSFIF).

Belongs to the copper transporter (Ctr) (TC 1.A.56) family. SLC31A subfamily.

It localises to the cell membrane. It carries out the reaction Cu(2+)(in) = Cu(2+)(out). In terms of biological role, high-affinity copper transporter of plasma membrane that mediates copper uptake under low copper conditions. The mechanism driving the transmembrane transport of copper has still to be determined. Acts as a potential virulence factor. This chain is High-affinity copper transporter ctrC, found in Aspergillus fumigatus (strain ATCC MYA-4609 / CBS 101355 / FGSC A1100 / Af293) (Neosartorya fumigata).